Reading from the N-terminus, the 110-residue chain is Large ribosomal subunit protein P1 (110 aa).

Residue Ala-2 is modified to Blocked amino end (Ala). Residues 69–83 are compositionally biased toward low complexity; it reads AAPAAGGAAAATEAP. The tract at residues 69 to 110 is disordered; that stretch reads AAPAAGGAAAATEAPAAKEEKKEEKKEESEEEDEDMGFGLFD. Over residues 84–96 the composition is skewed to basic and acidic residues; the sequence is AAKEEKKEEKKEE. Ser-97 bears the Phosphoserine; in form eL12'-P mark.

Part of the ribosomal stalk of the large ribosomal subunit; P1 and P2 exist as dimers which assemble on the P0 scaffold. Post-translationally, phosphorylation of Ser-97 converts eL12' to eL12'-P.

In terms of biological role, plays an important role in the elongation step of protein synthesis. The protein is Large ribosomal subunit protein P1 of Artemia salina (Brine shrimp).